Consider the following 156-residue polypeptide: uncharacterized protein (156 aa).

This is an uncharacterized protein from Bacillus subtilis (strain 168).